A 322-amino-acid polypeptide reads, in one-letter code: MELVLLDEETLYEYIFERYVELEANANDLSQDLGILSRNESELEIDIGPHRLVTRKKKAPERDEYTFSIHQNLTSLNSNRDNNNSTTGYVIWTTSTFILKWLLYNDNATIFTRGGVKDEVDITSIFQCQQDDKLRYVLELGTGTSPMFPIVFSNYVDKYVATDQKDILPRLKDNIQENQSECRRRLLKSNTIALDDLKRRTELECQIDIALLDWELFSGSKKSRNDPVLQCGPNFHLTIIAMDVIYNEYLIVPFLTTLESLFVWYTEQRVTVSALIGIQLRTQDVLEMFLEEAIIERQFIVHAVDEKELNKSRFILLHVNLP.

Residues Trp-92, 141–143 (GTG), Asp-163, Trp-214, and Met-242 contribute to the S-adenosyl-L-methionine site.

It belongs to the class I-like SAM-binding methyltransferase superfamily. RKM5 family.

Functionally, S-adenosyl-L-methionine-dependent protein-lysine N-methyltransferase that methylates 60S ribosomal protein L1. The polypeptide is Ribosomal lysine N-methyltransferase 5 (RKM5) (Kluyveromyces lactis (strain ATCC 8585 / CBS 2359 / DSM 70799 / NBRC 1267 / NRRL Y-1140 / WM37) (Yeast)).